Here is a 750-residue protein sequence, read N- to C-terminus: MIIRSPEPEVKILVDRDPVKTSFEAWAKPGHFSRTIAKGPETTTWIWNLHADAHDFDSHTSDLEEISRKIFSAHFGQLSIIFLWLSGMYFHGARFSNYEAWLSDPTHIGPSAQVVWPIVGQEILNGDVGGGFRGIQITSGFFQIWRASGITSELQLYCTAIGALVFAALMLFAGWFHYHKAAPKLAWFQDVESMLNHHLAGLLGLGSLSWAGHQIHVSLPINQFLNAGVDPKEIPLPHELILNRDLLAQLYPSFAEGATPFFTLNWSKYADFLTFRGGLDPVTGGLWLTDTAHHHLAIAILFLIAGHMYRTNWGIGHGLKDILEAHKGPFTGQGHKGLYEILTTSWHAQLALNLAMLGSLTIVVAHHMYAMPPYPYLATDYGTQLSLFTHHMWIGGFLIVGAAAHAAIFMVRDYDPTTRYNDLLDRVLRHRDAIISHLNWACIFLGFHSFGLYIHNDTMSALGRPQDMFSDTAIQLQPVFAQWIQNTHALAPSATAPGATASTSLTWGGSDLVAVGGKVALLPIPLGTADFLVHHIHAFTIHVTVLILLKGVLFARSSRLIPDKANLGFRFPCDGPGRGGTCQVSAWDHVFLGLFWMYNSISVVIFHFSWKMQSDVWGSISDQGVVTHITGGNFAQSSITINGWLRDFLWAQASQVIQSYGSSLSAYGLFFLGAHFVWAFSLMFLFSGRGYWQELIESIVWAHNKLKVAPATQPRALSIVQGRAVGVTHYLLGGIATTWAFFLARIIAVG.

8 consecutive transmembrane segments (helical) span residues 70–93 (IFSA…FHGA), 156–179 (LYCT…FHYH), 195–219 (LNHH…HVSL), 291–309 (TAHH…GHMY), 346–369 (WHAQ…HHMY), 385–411 (LSLF…IFMV), 433–455 (AIIS…LYIH), and 531–549 (FLVH…LILL). The [4Fe-4S] cluster site is built by cysteine 573 and cysteine 582. 2 helical membrane-spanning segments follow: residues 589–610 (HVFL…HFSW) and 664–686 (LSAY…MFLF). Chlorophyll a' is bound at residue histidine 675. Methionine 683 and tyrosine 691 together coordinate chlorophyll a. Tryptophan 692 is a binding site for phylloquinone. A helical membrane pass occupies residues 724-744 (AVGVTHYLLGGIATTWAFFLA).

It belongs to the PsaA/PsaB family. The PsaA/B heterodimer binds the P700 chlorophyll special pair and subsequent electron acceptors. PSI consists of a core antenna complex that captures photons, and an electron transfer chain that converts photonic excitation into a charge separation. The eukaryotic PSI reaction center is composed of at least 11 subunits. The cofactor is P700 is a chlorophyll a/chlorophyll a' dimer, A0 is one or more chlorophyll a, A1 is one or both phylloquinones and FX is a shared 4Fe-4S iron-sulfur center..

It is found in the plastid. The protein localises to the chloroplast thylakoid membrane. It catalyses the reaction reduced [plastocyanin] + hnu + oxidized [2Fe-2S]-[ferredoxin] = oxidized [plastocyanin] + reduced [2Fe-2S]-[ferredoxin]. Functionally, psaA and PsaB bind P700, the primary electron donor of photosystem I (PSI), as well as the electron acceptors A0, A1 and FX. PSI is a plastocyanin-ferredoxin oxidoreductase, converting photonic excitation into a charge separation, which transfers an electron from the donor P700 chlorophyll pair to the spectroscopically characterized acceptors A0, A1, FX, FA and FB in turn. Oxidized P700 is reduced on the lumenal side of the thylakoid membrane by plastocyanin. The chain is Photosystem I P700 chlorophyll a apoprotein A1 from Spinacia oleracea (Spinach).